A 430-amino-acid polypeptide reads, in one-letter code: MNVKVENIEKNVVKLEITVDSEKFNEAVKKSFKKNAKRFNVPGFRKGKAPLNIIKKYYGEGVLFEDAINFCCEDTYPKAIEENNIKPVDYPQIDVVQIGEGKDFIYTAEVTTVPKVKLGEYKGVEVKKVSYEVEDEAVENELKSMQEKNARVSLKEEGEIEKGNIAIIDFKGYVDGKAFEGGEAKDYEIEIGSGTFIGDFEDQLVGLKKDESKEVNVSFPEEYGREDLNGKPATFEVTIKDIKVKELPALDDEFAKEVSEFDTLEELKSDIKDRMKKELSEKAKAEYEEAVVEAVGANAEIEIPKVMIEKEIENMVRDLEMRLKYQGLDLKSYYEFTNSSEEKVKEYMRETAEKRVKTDLIMQEIAKVEDIKATEEELKEKAMEVAKQYGQKDVEKTAELIANAQKAYLEIDIVNGKVLDLLVESSKEIA.

The 86-residue stretch at 163-248 folds into the PPIase FKBP-type domain; sequence GNIAIIDFKG…IKDIKVKELP (86 aa).

Belongs to the FKBP-type PPIase family. Tig subfamily.

The protein localises to the cytoplasm. The catalysed reaction is [protein]-peptidylproline (omega=180) = [protein]-peptidylproline (omega=0). Involved in protein export. Acts as a chaperone by maintaining the newly synthesized protein in an open conformation. Functions as a peptidyl-prolyl cis-trans isomerase. In Clostridium botulinum (strain Kyoto / Type A2), this protein is Trigger factor.